The following is a 418-amino-acid chain: Glutamyl-tRNA reductase (418 aa).

Residues Thr-49–Arg-52, Ser-109, Glu-114–Gln-116, and Gln-120 each bind substrate. The active-site Nucleophile is Cys-50. Gly-189–Ile-194 serves as a coordination point for NADP(+).

It belongs to the glutamyl-tRNA reductase family. Homodimer.

It carries out the reaction (S)-4-amino-5-oxopentanoate + tRNA(Glu) + NADP(+) = L-glutamyl-tRNA(Glu) + NADPH + H(+). It participates in porphyrin-containing compound metabolism; protoporphyrin-IX biosynthesis; 5-aminolevulinate from L-glutamyl-tRNA(Glu): step 1/2. Its function is as follows. Catalyzes the NADPH-dependent reduction of glutamyl-tRNA(Glu) to glutamate 1-semialdehyde (GSA). The polypeptide is Glutamyl-tRNA reductase (Erwinia tasmaniensis (strain DSM 17950 / CFBP 7177 / CIP 109463 / NCPPB 4357 / Et1/99)).